The sequence spans 507 residues: Histidine ammonia-lyase (507 aa).

Residues 141–143 constitute a cross-link (5-imidazolinone (Ala-Gly)); that stretch reads ASG. Position 142 is a 2,3-didehydroalanine (Ser) (S142).

It belongs to the PAL/histidase family. Contains an active site 4-methylidene-imidazol-5-one (MIO), which is formed autocatalytically by cyclization and dehydration of residues Ala-Ser-Gly.

It localises to the cytoplasm. The catalysed reaction is L-histidine = trans-urocanate + NH4(+). The protein operates within amino-acid degradation; L-histidine degradation into L-glutamate; N-formimidoyl-L-glutamate from L-histidine: step 1/3. In Cereibacter sphaeroides (strain ATCC 17029 / ATH 2.4.9) (Rhodobacter sphaeroides), this protein is Histidine ammonia-lyase.